The sequence spans 176 residues: Small ribosomal subunit protein uS5 (176 aa).

Residues L11–V74 form the S5 DRBM domain.

Belongs to the universal ribosomal protein uS5 family. In terms of assembly, part of the 30S ribosomal subunit. Contacts proteins S4 and S8.

With S4 and S12 plays an important role in translational accuracy. Its function is as follows. Located at the back of the 30S subunit body where it stabilizes the conformation of the head with respect to the body. This chain is Small ribosomal subunit protein uS5, found in Rickettsia conorii (strain ATCC VR-613 / Malish 7).